A 91-amino-acid polypeptide reads, in one-letter code: MKPNIHPDNYRTVLFFDSSANEGWMIRSCAETHGKTMVWTDGKEYPLFSLDTSSASHPVYTGKQRNVNTEGRASKFNQRFQSVMSSFRKDK.

It belongs to the bacterial ribosomal protein bL31 family. Type B subfamily. Part of the 50S ribosomal subunit.

The sequence is that of Large ribosomal subunit protein bL31B from Neisseria meningitidis serogroup C (strain 053442).